The chain runs to 359 residues: 4-galactosyl-N-acetylglucosaminide 3-alpha-L-fucosyltransferase 9 (359 aa).

Residues 1-11 (MTSTSKGILRP) lie on the Cytoplasmic side of the membrane. Residues 12 to 32 (FLIVCVILACFMACLLIYIKP) traverse the membrane as a helical; Signal-anchor for type II membrane protein segment. The Lumenal portion of the chain corresponds to 33 to 359 (TNSWVFSPME…VGNLEKWFWN (327 aa)). N-linked (GlcNAc...) asparagine glycosylation occurs at asparagine 62. The segment at 63 to 168 (ETTILVWVWP…RRDSDIQVPY (106 aa)) is acceptor-binding. An a beta-D-galactosyl-(1-&gt;4)-N-acetyl-beta-D-glucosaminyl derivative-binding site is contributed by glutamine 75. Cystine bridges form between cysteine 82–cysteine 335, cysteine 91–cysteine 338, and cysteine 190–cysteine 238. The N-linked (GlcNAc...) asparagine glycan is linked to asparagine 101. Position 137 (glutamate 137) interacts with a beta-D-galactosyl-(1-&gt;4)-N-acetyl-beta-D-glucosaminyl derivative. Glutamate 137 acts as the Nucleophile in catalysis. Residue glutamate 137 coordinates GDP-beta-L-fucose. Asparagine 153 carries an N-linked (GlcNAc...) asparagine glycan. GDP-beta-L-fucose contacts are provided by tyrosine 168, valine 192, serine 194, asparagine 195, arginine 202, valine 226, tyrosine 241, asparagine 246, tyrosine 252, glutamate 255, and lysine 256. The tract at residues 169–326 (GFLTVSTNPF…NWRKDFTVNL (158 aa)) is donor-binding. Residues 327 to 359 (PRFWESHACLACDHVKRHQEYKSVGNLEKWFWN) are acceptor-binding.

This sequence belongs to the glycosyltransferase 10 family. In terms of assembly, homodimer. In terms of processing, N-glycosylated with complex-type N-glycans.

It localises to the golgi apparatus. The protein resides in the trans-Golgi network membrane. Its subcellular location is the golgi apparatus membrane. The enzyme catalyses a beta-D-galactosyl-(1-&gt;4)-N-acetyl-beta-D-glucosaminyl derivative + GDP-beta-L-fucose = a beta-D-galactosyl-(1-&gt;4)-[alpha-L-fucosyl-(1-&gt;3)]-N-acetyl-beta-D-glucosaminyl derivative + GDP + H(+). The catalysed reaction is an alpha-Neu5Ac-(2-&gt;3)-beta-D-Gal-(1-&gt;4)-beta-D-GlcNAc-(1-&gt;3)-beta-D-Gal-(1-&gt;4)-beta-D-GlcNAc derivative + GDP-beta-L-fucose = an alpha-Neu5Ac-(2-&gt;3)-beta-D-Gal-(1-&gt;4)-beta-D-GlcNAc-(1-&gt;3)-beta-D-Gal-(1-&gt;4)-[alpha-L-Fuc-(1-&gt;3)]-beta-D-GlcNAc derivative + GDP + H(+). It catalyses the reaction alpha-N-glycoloylneuraminosyl-(2-&gt;3)-beta-D-galactosyl-(1-&gt;4)-N-acetyl-beta-D-glucosaminyl-(1-&gt;3)-beta-D-galactosyl-(1-&gt;4)-N-acetyl-beta-D-glucosaminyl-(1-&gt;3)-beta-D-galactosyl-(1-&gt;4)-beta-D-glucosyl-(1&lt;-&gt;1')-ceramide + GDP-beta-L-fucose = alpha-N-glycoloylneuraminosyl-(2-&gt;3)-beta-D-galactosyl-(1-&gt;4)-N-acetyl-beta-D-glucosaminyl-(1-&gt;3)-beta-D-galactosyl-(1-&gt;4)-[alpha-L-fucosyl-(1-&gt;3)]-N-acetyl-beta-D-glucosaminyl-(1-&gt;3)-beta-D-galactosyl-(1-&gt;4)-beta-D-glucosyl-(1&lt;-&gt;1')-ceramide + GDP + H(+). It carries out the reaction alpha-D-galactosyl-(1-&gt;3)-beta-D-galactosyl-(1-&gt;4)-N-acetyl-beta-D-glucosaminyl-(1-&gt;3)-beta-D-galactosyl-(1-&gt;4)-beta-D-glucosyl-(1&lt;-&gt;1')-ceramide + GDP-beta-L-fucose = a neolactoside IV(3)-alpha-Gal,III(3)-alpha-Fuc-nLc4Cer + GDP + H(+). The enzyme catalyses a neolactoside nLc4Cer + GDP-beta-L-fucose = a neolactoside III(3)-alpha-Fuc-nLc4Cer + GDP + H(+). The catalysed reaction is an N-acetyl-alpha-neuraminyl-(2-&gt;3)-beta-D-galactosyl-(1-&gt;4)-N-acetyl-beta-D-glucosaminyl derivative + GDP-beta-L-fucose = an alpha-Neu5Ac-(2-&gt;3)-beta-D-Gal-(1-&gt;4)-[alpha-L-Fuc-(1-&gt;3)]-beta-D-GlcNAc derivative + GDP + H(+). It catalyses the reaction beta-D-Gal-(1-&gt;4)-beta-D-GlcNAc-(1-&gt;3)-beta-D-Gal-(1-&gt;4)-D-Glc + GDP-beta-L-fucose = beta-D-Gal-(1-&gt;4)-[alpha-L-Fuc-(1-&gt;3)]-beta-D-GlcNAc-(1-&gt;3)-beta-D-Gal-(1-&gt;4)-D-Glc + GDP + H(+). It carries out the reaction an alpha-L-Fuc-(1-&gt;2)-beta-D-Gal-(1-&gt;4)-beta-D-GlcNAc derivative + GDP-beta-L-fucose = an alpha-L-Fuc-(1-&gt;2)-beta-D-Gal-(1-&gt;4)-[alpha-L-Fuc-(1-&gt;3)]-beta-D-GlcNAc derivative + GDP + H(+). It participates in protein modification; protein glycosylation. It functions in the pathway glycolipid biosynthesis. Its activity is regulated as follows. Activated by Mn2+. Functionally, catalyzes alpha(1-&gt;3) linkage of fucosyl moiety transferred from GDP-beta-L-fucose to N-acetyl glucosamine (GlcNAc) within type 2 lactosamine (LacNAc, beta-D-Gal-(1-&gt;4)-beta-D-GlcNAc-) glycan attached to glycolipids and N- or O-linked glycoproteins. Fucosylates distal type 2 LacNAc and its fucosylated (H-type 2 LacNAc) and sialylated (sialyl-type 2 LacNAc) derivatives to form Lewis x (Lex) (CD15) and Lewis y (Ley) antigenic epitopes involved in cell adhesion and differentiation. Generates Lex epitopes in the brain, presumably playing a role in the maintenance of neuronal stemness and neurite outgrowth in progenitor neural cells. Fucosylates the internal type 2 LacNAc unit of the polylactosamine chain to form VIM-2 antigen that serves as recognition epitope for SELE. Can also modify milk oligosaccharides in particular type 2 tetrasaccharide LNnT. The sequence is that of 4-galactosyl-N-acetylglucosaminide 3-alpha-L-fucosyltransferase 9 from Cricetulus griseus (Chinese hamster).